The chain runs to 253 residues: Triosephosphate isomerase (253 aa).

8 to 10 contacts substrate; sequence NWK. Residue His-93 is the Electrophile of the active site. The Proton acceptor role is filled by Glu-165. Residues Gly-171, Ser-210, and 231 to 232 contribute to the substrate site; that span reads GG.

It belongs to the triosephosphate isomerase family. Homodimer.

It is found in the cytoplasm. It catalyses the reaction D-glyceraldehyde 3-phosphate = dihydroxyacetone phosphate. It participates in carbohydrate biosynthesis; gluconeogenesis. The protein operates within carbohydrate degradation; glycolysis; D-glyceraldehyde 3-phosphate from glycerone phosphate: step 1/1. Functionally, involved in the gluconeogenesis. Catalyzes stereospecifically the conversion of dihydroxyacetone phosphate (DHAP) to D-glyceraldehyde-3-phosphate (G3P). In Francisella tularensis subsp. holarctica (strain FTNF002-00 / FTA), this protein is Triosephosphate isomerase.